A 598-amino-acid polypeptide reads, in one-letter code: uncharacterized protein (598 aa).

Residues 39-322 (LIMVFVFVTV…LSNQFNMIQM (284 aa)) form the ABC transmembrane type-1 domain. The next 5 membrane-spanning stretches (helical) occupy residues 40-60 (IMVF…PYLI), 80-100 (MLIL…QGKI), 150-170 (VLGN…GAVI), 177-197 (VILS…TQIV), and 273-293 (LGFA…IITV). An ABC transporter domain is found at 355–589 (IEFKNVWFSY…RGFYYELFTS (235 aa)). Residue 388-395 (GPTGSGKT) participates in ATP binding.

The protein belongs to the ABC transporter superfamily.

It is found in the cell membrane. This is an uncharacterized protein from Thermotoga maritima (strain ATCC 43589 / DSM 3109 / JCM 10099 / NBRC 100826 / MSB8).